Consider the following 288-residue polypeptide: MELRDLQIFQSVADQGSVSSAAKELNYVQSNVTARIKQLENELKTPLFYRHKRGMTLTAEGRKMLVYVNKILQDVDELKQVFLDSETPSGILKIGTVETVSTLPTILSSYYKSYPNVDLSLQAGLTEELIREVLDHQLDGAFISGPIKHPLIEQYDVSTEKLMLVTQNKAFHIEEFTTTPLLVFNQGCGYRSKLERWLKDEGLLPKRIMEFNILETILNSVALGLGITLVPQSAVHHLSKAGKVHCHAIPEKYGSISTVFIRRKDSYMTNSMRSFLKTIEEHHHINML.

Residues 1–58 (MELRDLQIFQSVADQGSVSSAAKELNYVQSNVTARIKQLENELKTPLFYRHKRGMTLT) form the HTH lysR-type domain. A DNA-binding region (H-T-H motif) is located at residues 18-37 (VSSAAKELNYVQSNVTARIK).

This sequence belongs to the LysR transcriptional regulatory family.

This chain is HTH-type transcriptional regulator CzcR (czcR), found in Bacillus cereus (strain ATCC 10987 / NRS 248).